The chain runs to 78 residues: Conotoxin 5 (78 aa).

The first 22 residues, 1–22 (MKLTCMMIVTVLFLTAWIFITA), serve as a signal peptide directing secretion. Residues 23–49 (DNSRNGIENLPRMRRHEMKNPKASKLN) constitute a propeptide that is removed on maturation. Cystine bridges form between Cys-53/Cys-69, Cys-60/Cys-73, and Cys-68/Cys-77.

It belongs to the conotoxin O1 superfamily. In terms of tissue distribution, expressed by the venom duct.

The protein localises to the secreted. The protein is Conotoxin 5 of Conus imperialis (Imperial cone).